Here is a 484-residue protein sequence, read N- to C-terminus: Sperm motility kinase 1 (484 aa).

A Protein kinase domain is found at 8 to 256 (YEMLETIGQG…VAEVMVHPWI (249 aa)). Residues 14–22 (IGQGGCAKV) and lysine 37 each bind ATP. The active-site Proton acceptor is the aspartate 127. In terms of domain architecture, UBA spans 274–314 (KPDPAIVKPMGHIGFQAQDIEDSLRQRKFNETMASYCLLKK). Residues 423 to 434 (IDESTEGHTSAS) show a composition bias toward polar residues. The tract at residues 423–447 (IDESTEGHTSASAEDKPVHSRGWPR) is disordered.

This sequence belongs to the protein kinase superfamily. Tyr protein kinase family. Smok subfamily. In terms of tissue distribution, testis-specific. Expressed in the testis from 22 days postpartum (22 dpp).

It carries out the reaction L-seryl-[protein] + ATP = O-phospho-L-seryl-[protein] + ADP + H(+). It catalyses the reaction L-threonyl-[protein] + ATP = O-phospho-L-threonyl-[protein] + ADP + H(+). In terms of biological role, may play a role in sperm motility, especially in the regulation of flagellar function. The sequence is that of Sperm motility kinase 1 (Smok1) from Mus musculus (Mouse).